Consider the following 530-residue polypeptide: Tegument protein UL21 homolog (530 aa).

Belongs to the alphaherpesvirinae UL21 protein family. Interacts (via C-terminus) with UL16.

The protein localises to the virion tegument. It is found in the host cytoplasm. It localises to the host nucleus. May participate in DNA packaging/capsid maturation events. Promotes efficient incorporation of tegument proteins UL46, UL49, and US3 homologs into virions. May also play a role in capsid transport to the trans-Golgi network (TGN). This chain is Tegument protein UL21 homolog, found in Equus caballus (Horse).